The chain runs to 122 residues: Large ribosomal subunit protein uL18 (122 aa).

It belongs to the universal ribosomal protein uL18 family. As to quaternary structure, part of the 50S ribosomal subunit; part of the 5S rRNA/L5/L18/L25 subcomplex. Contacts the 5S and 23S rRNAs.

Functionally, this is one of the proteins that bind and probably mediate the attachment of the 5S RNA into the large ribosomal subunit, where it forms part of the central protuberance. This Mycobacterium ulcerans (strain Agy99) protein is Large ribosomal subunit protein uL18.